Reading from the N-terminus, the 89-residue chain is Large ribosomal subunit protein bL31B (89 aa).

The disordered stretch occupies residues 70-89 (RVQRFESRRRRRQQQSGEQG).

The protein belongs to the bacterial ribosomal protein bL31 family. Type B subfamily. Part of the 50S ribosomal subunit.

This Rubrobacter xylanophilus (strain DSM 9941 / JCM 11954 / NBRC 16129 / PRD-1) protein is Large ribosomal subunit protein bL31B.